We begin with the raw amino-acid sequence, 263 residues long: Proteasome subunit alpha (263 aa).

The interval 229–263 (AALLQDTPPDDADADADAGKKPANDGNLPPNDDKS) is disordered.

Belongs to the peptidase T1A family. The 20S proteasome core is composed of 14 alpha and 14 beta subunits that assemble into four stacked heptameric rings, resulting in a barrel-shaped structure. The two inner rings, each composed of seven catalytic beta subunits, are sandwiched by two outer rings, each composed of seven alpha subunits. The catalytic chamber with the active sites is on the inside of the barrel. Has a gated structure, the ends of the cylinder being occluded by the N-termini of the alpha-subunits. Is capped by the proteasome-associated ATPase, ARC.

Its subcellular location is the cytoplasm. Its pathway is protein degradation; proteasomal Pup-dependent pathway. With respect to regulation, the formation of the proteasomal ATPase ARC-20S proteasome complex, likely via the docking of the C-termini of ARC into the intersubunit pockets in the alpha-rings, may trigger opening of the gate for substrate entry. Interconversion between the open-gate and close-gate conformations leads to a dynamic regulation of the 20S proteasome proteolysis activity. Component of the proteasome core, a large protease complex with broad specificity involved in protein degradation. This Actinosynnema mirum (strain ATCC 29888 / DSM 43827 / JCM 3225 / NBRC 14064 / NCIMB 13271 / NRRL B-12336 / IMRU 3971 / 101) protein is Proteasome subunit alpha.